The primary structure comprises 491 residues: Sucrose transport protein SUC7 (491 aa).

Positions 1-13 (MSDLQANKDETTV) are enriched in basic and acidic residues. The tract at residues 1–25 (MSDLQANKDETTVDRQSSSSVDLDG) is disordered. Topologically, residues 1–32 (MSDLQANKDETTVDRQSSSSVDLDGPSPLRKM) are cytoplasmic. Position 17 is a phosphoserine (Ser-17). A helical transmembrane segment spans residues 33–53 (ISVASIAAGIQFGWALQLSLL). Residues 54–67 (TPYVQLLGVPHKWP) lie on the Extracellular side of the membrane. A helical transmembrane segment spans residues 68-88 (SFIWLCGPVSGLLVQPSVGYF). Residues 89-100 (SDRCTSRFGRRR) lie on the Cytoplasmic side of the membrane. The helical transmembrane segment at 101–121 (PFIATGALLVAVSVVLIGYAA) threads the bilayer. Residues 122–138 (DFGHSMGDKIDKPVKMR) lie on the Extracellular side of the membrane. The helical transmembrane segment at 139–159 (AVVIFALGFWILDVANNTLQG) threads the bilayer. The Cytoplasmic segment spans residues 160 to 180 (PCRAFLGDLAAGDAQKTRTAN). Residues 181–201 (AFFSFFMAVGNVLGYAAGSYT) form a helical membrane-spanning segment. Topologically, residues 202 to 223 (NLYKIFPFTMTKACDIYCANLK) are extracellular. The helical transmembrane segment at 224 to 244 (SCFFLSITLLLVVTIIALWYV) threads the bilayer. Over 245–276 (EDKQWSPKADSDNEKTPFFGEIFGAFKVMKRP) the chain is Cytoplasmic. The helical transmembrane segment at 277 to 297 (MWMLLIVTALNWIAWFPFLLY) threads the bilayer. Over 298-323 (DTDWMGREVYGGDSKGDDKMKKLYNQ) the chain is Extracellular. A helical membrane pass occupies residues 324–344 (GIHVGALGLMLNSIVLGVMSL). The Cytoplasmic segment spans residues 345 to 358 (GIEGISRKMGGAKR). A helical transmembrane segment spans residues 359–379 (LWGAVNIILAVCLAMTVLVTK). Residues 380–402 (KAEEHRRIAGPMALPTDGIRAGA) are Extracellular-facing. A helical transmembrane segment spans residues 403 to 423 (LTLFALLGIPLAITFSIPFAL). Residues 424 to 443 (ASIISSSSGAGQRLSLGVLN) lie on the Cytoplasmic side of the membrane. A helical membrane pass occupies residues 444 to 464 (MAIVIPQMIVSFGVGPIDALF). Topologically, residues 465–468 (GDGN) are extracellular. Residues 469–489 (LPGFVVGAIAAAVSSIVAFTV) form a helical membrane-spanning segment. The Cytoplasmic segment spans residues 490-491 (LP).

The protein belongs to the glycoside-pentoside-hexuronide (GPH) cation symporter transporter (TC 2.A.2.4) family. In terms of tissue distribution, expressed in anthers.

The protein localises to the cell membrane. It functions in the pathway glycan biosynthesis; sucrose metabolism. Its function is as follows. May be responsible for the transport of glucosides into the cell, with the concomitant uptake of protons (symport system). Does not seem to transport sucrose. The chain is Sucrose transport protein SUC7 from Arabidopsis thaliana (Mouse-ear cress).